A 308-amino-acid chain; its full sequence is Ornithine carbamoyltransferase (308 aa).

Carbamoyl phosphate is bound by residues 52–55 (STRT), Gln-79, Arg-103, and 130–133 (HPLQ). Residues Asn-162, Asp-224, and 228 to 229 (SM) each bind L-ornithine. Carbamoyl phosphate is bound by residues 264–265 (CL) and Arg-292.

This sequence belongs to the aspartate/ornithine carbamoyltransferase superfamily. OTCase family.

The protein localises to the cytoplasm. It catalyses the reaction carbamoyl phosphate + L-ornithine = L-citrulline + phosphate + H(+). Its pathway is amino-acid biosynthesis; L-arginine biosynthesis; L-arginine from L-ornithine and carbamoyl phosphate: step 1/3. Reversibly catalyzes the transfer of the carbamoyl group from carbamoyl phosphate (CP) to the N(epsilon) atom of ornithine (ORN) to produce L-citrulline. The protein is Ornithine carbamoyltransferase of Pyrobaculum calidifontis (strain DSM 21063 / JCM 11548 / VA1).